The chain runs to 381 residues: Acetylornithine deacetylase (381 aa).

His-78 is a Zn(2+) binding site. Asp-80 is a catalytic residue. Asp-110 is a binding site for Zn(2+). Glu-142 is an active-site residue. Zn(2+) contacts are provided by Glu-143, Glu-167, and His-353.

This sequence belongs to the peptidase M20A family. ArgE subfamily. As to quaternary structure, homodimer. The cofactor is Zn(2+). Co(2+) serves as cofactor. Glutathione is required as a cofactor.

The protein resides in the cytoplasm. The catalysed reaction is N(2)-acetyl-L-ornithine + H2O = L-ornithine + acetate. Its pathway is amino-acid biosynthesis; L-arginine biosynthesis; L-ornithine from N(2)-acetyl-L-ornithine (linear): step 1/1. Functionally, catalyzes the hydrolysis of the amide bond of N(2)-acetylated L-amino acids. Cleaves the acetyl group from N-acetyl-L-ornithine to form L-ornithine, an intermediate in L-arginine biosynthesis pathway, and a branchpoint in the synthesis of polyamines. The polypeptide is Acetylornithine deacetylase (Moritella profunda).